The following is a 641-amino-acid chain: Frizzled-1 (641 aa).

Positions M1 to G68 are cleaved as a signal peptide. Residues V69–W316 lie on the Extracellular side of the membrane. The interval A74 to G99 is disordered. Residues P106–Q224 enclose the FZ domain. 5 disulfides stabilise this stretch: C111–C172, C119–C165, C156–C192, C182–C221, and C186–C209. N-linked (GlcNAc...) asparagine glycosylation occurs at N125. N225 carries an N-linked (GlcNAc...) asparagine glycan. The chain crosses the membrane as a helical span at residues I317–V337. Over D338 to P348 the chain is Cytoplasmic. Residues I349–L369 traverse the membrane as a helical segment. Over E370–C396 the chain is Extracellular. A helical transmembrane segment spans residues T397–L417. Residues S418–Q439 lie on the Cytoplasmic side of the membrane. The chain crosses the membrane as a helical span at residues Y440 to G460. At Q461–G483 the chain is on the extracellular side. Residues F484–F504 form a helical membrane-spanning segment. Topologically, residues V505–R530 are cytoplasmic. A helical membrane pass occupies residues I531 to Y551. Over E552–T595 the chain is Extracellular. The chain crosses the membrane as a helical span at residues V596–W616. Residues S617–V641 lie on the Cytoplasmic side of the membrane. The short motif at K619 to W624 is the Lys-Thr-X-X-X-Trp motif, mediates interaction with the PDZ domain of Dvl family members element. A PDZ-binding motif is present at residues T639–V641.

Belongs to the G-protein coupled receptor Fz/Smo family. As to quaternary structure, interacts with MYOC. Interacts with WNT7B. Post-translationally, ubiquitinated by ZNRF3, leading to its degradation by the proteasome. As to expression, widely expressed. Most abundant in kidney, liver, uterus, ovary and heart. Lower levels seen in brain and intestine. Extremely low in calvaria, mammary glands and testis.

The protein localises to the cell membrane. Receptor for Wnt proteins. Activated by WNT3A, WNT3, WNT1 and to a lesser extent WNT2, but apparently not by WNT4, WNT5A, WNT5B, WNT6 or WNT7A. Contradictory results have been reported for activation by WNT7B. Functions in the canonical Wnt/beta-catenin signaling pathway. The canonical Wnt/beta-catenin signaling pathway leads to the activation of disheveled proteins, inhibition of GSK-3 kinase, nuclear accumulation of beta-catenin and activation of Wnt target genes. A second signaling pathway involving PKC and calcium fluxes has been seen for some family members, but it is not yet clear if it represents a distinct pathway or if it can be integrated in the canonical pathway, as PKC seems to be required for Wnt-mediated inactivation of GSK-3 kinase. Both pathways seem to involve interactions with G-proteins. May be involved in transduction and intercellular transmission of polarity information during tissue morphogenesis and/or in differentiated tissues. The chain is Frizzled-1 (Fzd1) from Rattus norvegicus (Rat).